The following is a 380-amino-acid chain: Tryptophan--tRNA ligase (380 aa).

The 'HIGH' region motif lies at 81-89 (PSLGMHIGH). A 'KMSKS' region motif is present at residues 253–257 (KMSSS).

The protein belongs to the class-I aminoacyl-tRNA synthetase family.

It is found in the cytoplasm. The catalysed reaction is tRNA(Trp) + L-tryptophan + ATP = L-tryptophyl-tRNA(Trp) + AMP + diphosphate + H(+). The polypeptide is Tryptophan--tRNA ligase (Saccharolobus solfataricus (strain ATCC 35092 / DSM 1617 / JCM 11322 / P2) (Sulfolobus solfataricus)).